Consider the following 400-residue polypeptide: Exodeoxyribonuclease 7 large subunit (400 aa).

This sequence belongs to the XseA family. Heterooligomer composed of large and small subunits.

The protein resides in the cytoplasm. It catalyses the reaction Exonucleolytic cleavage in either 5'- to 3'- or 3'- to 5'-direction to yield nucleoside 5'-phosphates.. Its function is as follows. Bidirectionally degrades single-stranded DNA into large acid-insoluble oligonucleotides, which are then degraded further into small acid-soluble oligonucleotides. The polypeptide is Exodeoxyribonuclease 7 large subunit (Clostridium novyi (strain NT)).